The sequence spans 385 residues: 3-hydroxyisobutyryl-CoA hydrolase, mitochondrial (385 aa).

Substrate contacts are provided by Glu120, Gly145, Glu168, and Asp176.

The protein belongs to the enoyl-CoA hydratase/isomerase family.

It is found in the mitochondrion. It catalyses the reaction 3-hydroxy-2-methylpropanoyl-CoA + H2O = 3-hydroxy-2-methylpropanoate + CoA + H(+). It participates in amino-acid degradation; L-valine degradation. Its function is as follows. Hydrolyzes 3-hydroxyisobutyryl-CoA (HIBYL-CoA), a saline catabolite. Has high activity toward isobutyryl-CoA. Could be an isobutyryl-CoA dehydrogenase that functions in valine catabolism. Also hydrolyzes 3-hydroxypropanoyl-CoA. The chain is 3-hydroxyisobutyryl-CoA hydrolase, mitochondrial (hibch) from Xenopus tropicalis (Western clawed frog).